The chain runs to 50 residues: Defensin D1 (50 aa).

4 cysteine pairs are disulfide-bonded: cysteine 3–cysteine 50, cysteine 14–cysteine 35, cysteine 20–cysteine 44, and cysteine 24–cysteine 46.

Post-translationally, contains 4 disulfide bonds.

It localises to the secreted. Its function is as follows. Antimicrobial peptide active against fungi, Gram-positive and Gram-negative bacteria. Inhibits growth of hyphae in the fungi A.niger (IC(50)=3.5 ug/ml), B.sorokiniana (IC(50)=3.0 ug/ml), F.oxysporum (IC(50)=9.5 ug/ml), F.graminearum (IC(50)=6.9 ug/ml), F.culmorum (IC(50)=6.9 ug/ml) and B.cinerea (IC(50)=27.4 ug/ml). Has no effect on spore germination. Destroys spores in germinated conidia by disruption of cell walls and membranes in A.niger and B.sorokiniana. Causes vacuolization of germinated macro- and microconidia in F.oxysporum, F.graminearum and F.culmorum. Strongly inhibits growth of P.infestans on potato tubers above concentrations of 13.6 ug/ml. Inhibits growth of Gram-positive bacteria C.michiganensis and B.subtilis and of Gram-negative bacteria P.syringae, E.carotovora and E.coli. The sequence is that of Defensin D1 from Nigella sativa (Black cumin).